The sequence spans 341 residues: Protein P3 (341 aa).

The segment at 46–175 is disordered; that stretch reads RARQAANPVS…QTKNAPDANE (130 aa). Residues 97 to 116 are compositionally biased toward basic residues; sequence KSKRAVRREKRRTAAKKATN. Positions 142 to 152 are enriched in low complexity; it reads SYLSSLLSSPS.

This sequence belongs to the nepovirus protein P3 family.

In Vitis rupestris (Grape), this protein is Protein P3.